The following is a 203-amino-acid chain: MRLTRDFYAKDARVLAKELLGKVLVREVDGIKLKGKIVETEAYIGAIDKASHAYGGRRTKRTEPLYGKPGIAYVYFIYGKYFCFNIISKTEGEAEGVLIRALEPLENINLISKLRFNKEFEELNNYQRKNITSGPSKLCMAFNINRDNNWEDLCESSSLYVEDVLYNDFEIIETVRVGIDYAEEARDFLWRYYIKDNAFVSVK.

This sequence belongs to the DNA glycosylase MPG family.

In Clostridium botulinum (strain Loch Maree / Type A3), this protein is Putative 3-methyladenine DNA glycosylase.